The primary structure comprises 347 residues: N-acetyl-gamma-glutamyl-phosphate reductase (347 aa).

The active site involves Cys152.

It belongs to the NAGSA dehydrogenase family. Type 1 subfamily.

Its subcellular location is the cytoplasm. The catalysed reaction is N-acetyl-L-glutamate 5-semialdehyde + phosphate + NADP(+) = N-acetyl-L-glutamyl 5-phosphate + NADPH + H(+). Its pathway is amino-acid biosynthesis; L-arginine biosynthesis; N(2)-acetyl-L-ornithine from L-glutamate: step 3/4. In terms of biological role, catalyzes the NADPH-dependent reduction of N-acetyl-5-glutamyl phosphate to yield N-acetyl-L-glutamate 5-semialdehyde. The protein is N-acetyl-gamma-glutamyl-phosphate reductase of Neisseria gonorrhoeae (strain ATCC 700825 / FA 1090).